A 397-amino-acid chain; its full sequence is S-adenosylmethionine synthase (397 aa).

His16 contributes to the ATP binding site. Asp18 provides a ligand contact to Mg(2+). Position 44 (Glu44) interacts with K(+). Residues Glu57 and Gln100 each contribute to the L-methionine site. The tract at residues 100-110 (QSPDIAQGVNE) is flexible loop. ATP is bound by residues 175–177 (DAK), 242–243 (RF), Asp251, 257–258 (RK), Ala274, and Lys278. Asp251 contributes to the L-methionine binding site. An L-methionine-binding site is contributed by Lys282.

It belongs to the AdoMet synthase family. Homotetramer; dimer of dimers. The cofactor is Mg(2+). K(+) serves as cofactor.

It localises to the cytoplasm. The catalysed reaction is L-methionine + ATP + H2O = S-adenosyl-L-methionine + phosphate + diphosphate. It participates in amino-acid biosynthesis; S-adenosyl-L-methionine biosynthesis; S-adenosyl-L-methionine from L-methionine: step 1/1. Catalyzes the formation of S-adenosylmethionine (AdoMet) from methionine and ATP. The overall synthetic reaction is composed of two sequential steps, AdoMet formation and the subsequent tripolyphosphate hydrolysis which occurs prior to release of AdoMet from the enzyme. The chain is S-adenosylmethionine synthase from Streptococcus thermophilus (strain ATCC BAA-250 / LMG 18311).